A 297-amino-acid chain; its full sequence is N-acetylmuramic acid 6-phosphate etherase (297 aa).

The region spanning 55–218 is the SIS domain; it reads AAAALKSGGR…STGAMVKFGK (164 aa). The Proton donor role is filled by Glu83. The active site involves Glu114.

This sequence belongs to the GCKR-like family. MurNAc-6-P etherase subfamily. As to quaternary structure, homodimer.

The enzyme catalyses N-acetyl-D-muramate 6-phosphate + H2O = N-acetyl-D-glucosamine 6-phosphate + (R)-lactate. Its pathway is amino-sugar metabolism; 1,6-anhydro-N-acetylmuramate degradation. The protein operates within amino-sugar metabolism; N-acetylmuramate degradation. It participates in cell wall biogenesis; peptidoglycan recycling. Functionally, specifically catalyzes the cleavage of the D-lactyl ether substituent of MurNAc 6-phosphate, producing GlcNAc 6-phosphate and D-lactate. Together with AnmK, is also required for the utilization of anhydro-N-acetylmuramic acid (anhMurNAc) either imported from the medium or derived from its own cell wall murein, and thus plays a role in cell wall recycling. The protein is N-acetylmuramic acid 6-phosphate etherase of Salmonella typhi.